Reading from the N-terminus, the 212-residue chain is Ribonuclease HII (212 aa).

Positions 22–211 (GLVAGVDEVG…VADRILLQNT (190 aa)) constitute an RNase H type-2 domain. Positions 28, 29, and 120 each coordinate a divalent metal cation.

This sequence belongs to the RNase HII family. The cofactor is Mn(2+). Mg(2+) serves as cofactor.

It localises to the cytoplasm. It catalyses the reaction Endonucleolytic cleavage to 5'-phosphomonoester.. Its function is as follows. Endonuclease that specifically degrades the RNA of RNA-DNA hybrids. The protein is Ribonuclease HII of Shewanella frigidimarina (strain NCIMB 400).